Consider the following 475-residue polypeptide: tRNA-2-methylthio-N(6)-dimethylallyladenosine synthase (475 aa).

Residues 1–21 (MTTAPTSPALPASSDTAPTGP) form a disordered region. An MTTase N-terminal domain is found at 24–145 (RGLHVITWGC…LPEMVARAAR (122 aa)). Residues cysteine 33, cysteine 69, cysteine 108, cysteine 186, cysteine 190, and cysteine 193 each contribute to the [4Fe-4S] cluster site. Positions 172–404 (TQGNLTAFLT…QALLREQQDA (233 aa)) constitute a Radical SAM core domain. A TRAM domain is found at 407–469 (ADMVGTVQEI…TNSLGGTLIR (63 aa)).

Belongs to the methylthiotransferase family. MiaB subfamily. As to quaternary structure, monomer. It depends on [4Fe-4S] cluster as a cofactor.

The protein resides in the cytoplasm. The catalysed reaction is N(6)-dimethylallyladenosine(37) in tRNA + (sulfur carrier)-SH + AH2 + 2 S-adenosyl-L-methionine = 2-methylsulfanyl-N(6)-dimethylallyladenosine(37) in tRNA + (sulfur carrier)-H + 5'-deoxyadenosine + L-methionine + A + S-adenosyl-L-homocysteine + 2 H(+). In terms of biological role, catalyzes the methylthiolation of N6-(dimethylallyl)adenosine (i(6)A), leading to the formation of 2-methylthio-N6-(dimethylallyl)adenosine (ms(2)i(6)A) at position 37 in tRNAs that read codons beginning with uridine. The protein is tRNA-2-methylthio-N(6)-dimethylallyladenosine synthase of Gluconobacter oxydans (strain 621H) (Gluconobacter suboxydans).